The chain runs to 307 residues: Probable RuBisCO transcriptional regulator (307 aa).

An HTH lysR-type domain is found at 5–62 (FTLQQLRIFKAIASEKSFTQAAEILFVSQPSLSKQIKTLENRLGILLLNRTGNKILLT). A DNA-binding region (H-T-H motif) is located at residues 22-41 (FTQAAEILFVSQPSLSKQIK).

This sequence belongs to the LysR transcriptional regulatory family.

The protein resides in the plastid. Its subcellular location is the chloroplast. Functionally, trans-acting transcriptional regulator of RuBisCO genes (rbcL and rbcS) expression. This chain is Probable RuBisCO transcriptional regulator (rbcR-A), found in Thalassiosira pseudonana (Marine diatom).